Consider the following 763-residue polypeptide: MNVALHELGGGGSMVEYKRAKLRDEESPEITVEGRATRDSLEVGFQKRTRQLFGSHTQLELVLAGLILVLAALLLGCLVALWVHRDPAHSTCVTEACIRVAGKILESLDRGVSPCQDFYQFSCGGWIRRNPLPNGRSRWNTFNSLWDQNQAILKHLLENTTFNSSSEAERKTRSFYLSCLQSERIEKLGAKPLRDLIDKIGGWNITGPWDEDSFMDVLKAVAGTYRATPFFTVYVSADSKSSNSNIIQVDQSGLFLPSRDYYLNRTANEKVLTAYLDYMVELGVLLGGQPTSTREQMQQVLELEIQLANITVPQDQRRDEEKIYHKMSISELQALAPAVDWLEFLSFLLSPLELGDSEPVVVYGTEYLQQVSELINRTEPSILNNYLIWNLVQKTTSSLDQRFETAQEKLLETLYGTKKSCTPRWQTCISNTDDALGFALGSLFVKATFDRQSKEIAEGMINEIRSAFEETLGDLVWMDEKTRLAAKEKADAIYDMIGFPDFILEPKELDDVYDGYEVSEDSFFQNMLNLYNFSAKVMADQLRKPPSRDQWSMTPQTVNAYYLPTKNEIVFPAGILQAPFYAHNHPKALNFGGIGVVMGHELTHAFDDQGREYDKEGNLRPWWQNESLTAFQNHTACMEEQYSQYQVNGERLNGLQTLGENIADNGGLKAAYNAYKAWLRKHGEEQPLPAVGLTNHQLFFVGFAQVWCSVRTPESSHEGLVTDPHSPARFRVLGTLSNSRDFLRHFGCPVGSPMNPGQLCEVW.

Residues 1–60 (MNVALHELGGGGSMVEYKRAKLRDEESPEITVEGRATRDSLEVGFQKRTRQLFGSHTQLE) lie on the Cytoplasmic side of the membrane. The residue at position 27 (Ser-27) is a Phosphoserine. A helical; Signal-anchor for type II membrane protein membrane pass occupies residues 61–81 (LVLAGLILVLAALLLGCLVAL). At 82–763 (WVHRDPAHST…MNPGQLCEVW (682 aa)) the chain is on the lumenal side. The Peptidase M13 domain occupies 91 to 763 (TCVTEACIRV…MNPGQLCEVW (673 aa)). 5 disulfides stabilise this stretch: Cys-92–Cys-97, Cys-115–Cys-748, Cys-123–Cys-708, Cys-179–Cys-428, and Cys-637–Cys-760. N-linked (GlcNAc...) asparagine glycans are attached at residues Asn-159, Asn-163, Asn-204, Asn-264, Asn-309, Asn-376, and Asn-532. Zn(2+) is bound at residue His-600. Glu-601 is an active-site residue. His-604 is a binding site for Zn(2+). Residues Asn-625 and Asn-633 are each glycosylated (N-linked (GlcNAc...) asparagine). Glu-660 provides a ligand contact to Zn(2+). Asp-664 serves as the catalytic Proton donor.

It belongs to the peptidase M13 family. Requires Zn(2+) as cofactor.

It localises to the golgi apparatus membrane. It is found in the cytoplasmic vesicle. The protein localises to the secretory vesicle membrane. It catalyses the reaction Hydrolysis of the 21-Trp-|-Val-22 bond in big endothelin to form endothelin 1.. Functionally, converts big endothelin-1 to endothelin-1. Also involved in the processing of various neuroendocrine peptides, including neurotensin, angiotensin I, substance P, proenkephalin-derived peptides, and prodynorphin-derived peptides. May play a role in amyloid-beta processing. This is Endothelin-converting enzyme 2 from Mus musculus (Mouse).